The chain runs to 213 residues: Ribosomal RNA large subunit methyltransferase E (213 aa).

S-adenosyl-L-methionine contacts are provided by G60, W62, D80, D96, and D121. Catalysis depends on K161, which acts as the Proton acceptor.

It belongs to the class I-like SAM-binding methyltransferase superfamily. RNA methyltransferase RlmE family.

The protein localises to the cytoplasm. It catalyses the reaction uridine(2552) in 23S rRNA + S-adenosyl-L-methionine = 2'-O-methyluridine(2552) in 23S rRNA + S-adenosyl-L-homocysteine + H(+). Its function is as follows. Specifically methylates the uridine in position 2552 of 23S rRNA at the 2'-O position of the ribose in the fully assembled 50S ribosomal subunit. This chain is Ribosomal RNA large subunit methyltransferase E, found in Xylella fastidiosa (strain 9a5c).